Here is a 157-residue protein sequence, read N- to C-terminus: Small ribosomal subunit protein uS7 (157 aa).

It belongs to the universal ribosomal protein uS7 family. In terms of assembly, part of the 30S ribosomal subunit. Contacts proteins S9 and S11.

Functionally, one of the primary rRNA binding proteins, it binds directly to 16S rRNA where it nucleates assembly of the head domain of the 30S subunit. Is located at the subunit interface close to the decoding center, probably blocks exit of the E-site tRNA. The polypeptide is Small ribosomal subunit protein uS7 (Polaromonas naphthalenivorans (strain CJ2)).